The chain runs to 591 residues: Laccase (591 aa).

An N-terminal signal peptide occupies residues 1–20 (MPSFFRALFSGLIASQLSWA). 2 Plastocyanin-like domains span residues 66-189 (VRQY…IQID) and 198-356 (IDLG…HPTN). Asparagine 121 carries N-linked (GlcNAc...) asparagine glycosylation. Cu cation contacts are provided by histidine 126, histidine 128, histidine 171, and histidine 173. Intrachain disulfides connect cysteine 147-cysteine 571 and cysteine 332-cysteine 366. N-linked (GlcNAc...) asparagine glycosylation is found at asparagine 234, asparagine 242, asparagine 265, and asparagine 323. 2 N-linked (GlcNAc...) asparagine glycosylation sites follow: asparagine 407 and asparagine 425. Residues 416–551 (GHPITQYVIN…AGLGNTFLEQ (136 aa)) form the Plastocyanin-like 3 domain. Positions 463, 466, 468, 533, 534, 535, and 539 each coordinate Cu cation.

Belongs to the multicopper oxidase family. The cofactor is Cu cation.

It localises to the secreted. It carries out the reaction 4 hydroquinone + O2 = 4 benzosemiquinone + 2 H2O. Functionally, lignin degradation and detoxification of lignin-derived products. The sequence is that of Laccase (LAC-1) from Cryphonectria parasitica (Chestnut blight fungus).